Consider the following 175-residue polypeptide: ATP synthase subunit b (175 aa).

Residues 24 to 44 traverse the membrane as a helical segment; sequence LVLWQIAATVILIIVVRIFLW.

The protein belongs to the ATPase B chain family. F-type ATPases have 2 components, F(1) - the catalytic core - and F(0) - the membrane proton channel. F(1) has five subunits: alpha(3), beta(3), gamma(1), delta(1), epsilon(1). F(0) has three main subunits: a(1), b(2) and c(10-14). The alpha and beta chains form an alternating ring which encloses part of the gamma chain. F(1) is attached to F(0) by a central stalk formed by the gamma and epsilon chains, while a peripheral stalk is formed by the delta and b chains.

It is found in the cell membrane. In terms of biological role, f(1)F(0) ATP synthase produces ATP from ADP in the presence of a proton or sodium gradient. F-type ATPases consist of two structural domains, F(1) containing the extramembraneous catalytic core and F(0) containing the membrane proton channel, linked together by a central stalk and a peripheral stalk. During catalysis, ATP synthesis in the catalytic domain of F(1) is coupled via a rotary mechanism of the central stalk subunits to proton translocation. Its function is as follows. Component of the F(0) channel, it forms part of the peripheral stalk, linking F(1) to F(0). The sequence is that of ATP synthase subunit b from Acholeplasma laidlawii (strain PG-8A).